A 185-amino-acid chain; its full sequence is Ribosome-recycling factor (185 aa).

Belongs to the RRF family.

The protein localises to the cytoplasm. Functionally, responsible for the release of ribosomes from messenger RNA at the termination of protein biosynthesis. May increase the efficiency of translation by recycling ribosomes from one round of translation to another. This chain is Ribosome-recycling factor, found in Campylobacter jejuni subsp. doylei (strain ATCC BAA-1458 / RM4099 / 269.97).